The sequence spans 252 residues: Large ribosomal subunit protein uL4 (252 aa).

Belongs to the universal ribosomal protein uL4 family. In terms of assembly, part of the 50S ribosomal subunit.

Its function is as follows. One of the primary rRNA binding proteins, this protein initially binds near the 5'-end of the 23S rRNA. It is important during the early stages of 50S assembly. It makes multiple contacts with different domains of the 23S rRNA in the assembled 50S subunit and ribosome. In terms of biological role, forms part of the polypeptide exit tunnel. The sequence is that of Large ribosomal subunit protein uL4 from Methanococcus vannielii (strain ATCC 35089 / DSM 1224 / JCM 13029 / OCM 148 / SB).